Reading from the N-terminus, the 299-residue chain is N-acetylaspartate synthetase (299 aa).

Residues 44 to 57 (AAPGPAAAPPPAAG) are compositionally biased toward pro residues. The disordered stretch occupies residues 44–70 (AAPGPAAAPPPAAGPQPHGGTGGAGPP). Gly residues predominate over residues 60-70 (PHGGTGGAGPP). A helical transmembrane segment spans residues 118 to 138 (YALLAALCFAVTRSLLLTCLV). The N-acetyltransferase domain occupies 143 to 280 (LALRYYYSRK…VLPGMTLSLA (138 aa)).

It belongs to the NAT8 family. In terms of tissue distribution, expressed in brain, including in mesencephalic dopaminergic neurons of the substantia nigra and ventral tegmental area and oligodendrocytes. Expressed in cortical pyramidal neurons and granule cells of the hippocampus (at protein level).

The protein localises to the cytoplasm. It localises to the microsome membrane. Its subcellular location is the mitochondrion membrane. The protein resides in the endoplasmic reticulum membrane. It catalyses the reaction L-aspartate + acetyl-CoA = N-acetyl-L-aspartate + CoA + H(+). Aminooxyacetic acid (AOAA) blocks its activity in both cytoplasm and mitochondria. Functionally, catalyzes the synthesis of N-acetylaspartate acid (NAA) from L-aspartate and acetyl-CoA. Promotes dopamine uptake by regulating TNF-alpha expression. Attenuates methamphetamine-induced inhibition of dopamine uptake. The polypeptide is N-acetylaspartate synthetase (Nat8l) (Rattus norvegicus (Rat)).